We begin with the raw amino-acid sequence, 268 residues long: Forkhead box protein R1 (268 aa).

Residues 91–126 (EDSCSEASEVQQPLPPCRQKRKQRRSTVPLPLAPGR) are disordered. The fork-head DNA-binding region spans 149–248 (RPPLHYFHLI…KEARTLASTQ (100 aa)).

In terms of tissue distribution, expressed in adult germ cells (at protein level). Expressed in heart, liver, lung and embryonic brain.

It is found in the nucleus. The protein resides in the cytoplasm. The protein localises to the perinuclear region. Its function is as follows. Transcription factor which acts as both an activator and a repressor. Activates transcription of a number of genes including the heat shock chaperones HSPA1A and HSPA6 and the antioxidant NADPH-dependent reductase DHRS2 which are involved in protection against oxidative stress. Required for normal brain development. This chain is Forkhead box protein R1 (Foxr1), found in Mus musculus (Mouse).